Consider the following 447-residue polypeptide: Putative branched-chain amino acid carrier protein SH1502 (447 aa).

The next 13 membrane-spanning stretches (helical) occupy residues 6–26, 40–60, 74–94, 116–136, 143–163, 193–213, 229–249, 270–287, 290–310, 328–348, 350–370, 382–402, and 417–437; these read WIVG…IFPP, VIAF…VGAL, PKFS…LFAI, LVLF…CINP, IGSL…IKGF, GYLT…VNAI, VMSG…LGFI, VGAY…GVFG, LLGI…IVSV, IFFT…VISM, VPVL…ILLA, IPIA…NGWV, and LEWF…AKFV.

Belongs to the branched chain amino acid transporter family.

It is found in the cell membrane. Component of the transport system for branched-chain amino acids (leucine, isoleucine and valine), which is coupled to a proton motive force. The polypeptide is Putative branched-chain amino acid carrier protein SH1502 (Staphylococcus haemolyticus (strain JCSC1435)).